Here is a 145-residue protein sequence, read N- to C-terminus: Neuromedin-S (145 aa).

The first 25 residues, 1–25, serve as a signal peptide directing secretion; sequence MKYLAQFPSILAIYCFCLLQIPSSG. 3 consecutive propeptides follow at residues 26–64, 65–100, and 101–103; these read FPRP…IYKR, FLFH…ADRR, and MKT. Asn-136 bears the Asparagine amide mark. A propeptide spanning residues 139–145 is cleaved from the precursor; that stretch reads NLDFDTW.

This sequence belongs to the NmU family.

It localises to the secreted. Functionally, implicated in the regulation of circadian rhythms through autocrine and/or paracrine actions. The polypeptide is Neuromedin-S (NMS) (Bos taurus (Bovine)).